A 187-amino-acid polypeptide reads, in one-letter code: Resolvase OPG149 (187 aa).

It belongs to the RuvC family. Poxviruses-type subfamily. The cofactor is Mg(2+).

Functionally, plays a role in DNA replication by cleaving viral DNA concatamers to yield unit-length viral genomes. The concatamer junctions contain inverted repeat sequences that can be extruded as cruciforms, yielding Holliday junctions that A22 protein cleaves. The sequence is that of Resolvase OPG149 (OPG149) from Cynomys gunnisoni (Gunnison's prairie dog).